A 127-amino-acid polypeptide reads, in one-letter code: Large ribosomal subunit protein bL12 (127 aa).

Belongs to the bacterial ribosomal protein bL12 family. Homodimer. Part of the ribosomal stalk of the 50S ribosomal subunit. Forms a multimeric L10(L12)X complex, where L10 forms an elongated spine to which 2 to 4 L12 dimers bind in a sequential fashion. Binds GTP-bound translation factors.

Its function is as follows. Forms part of the ribosomal stalk which helps the ribosome interact with GTP-bound translation factors. Is thus essential for accurate translation. In Clavibacter michiganensis subsp. michiganensis (strain NCPPB 382), this protein is Large ribosomal subunit protein bL12.